Here is a 385-residue protein sequence, read N- to C-terminus: Chorismate synthase (385 aa).

Positions 40 and 46 each coordinate NADP(+). FMN is bound by residues 128-130 (RAS), 248-249 (QA), Gly293, 308-312 (KAIPS), and Arg334.

Belongs to the chorismate synthase family. As to quaternary structure, homotetramer. It depends on FMNH2 as a cofactor.

The catalysed reaction is 5-O-(1-carboxyvinyl)-3-phosphoshikimate = chorismate + phosphate. It participates in metabolic intermediate biosynthesis; chorismate biosynthesis; chorismate from D-erythrose 4-phosphate and phosphoenolpyruvate: step 7/7. Its function is as follows. Catalyzes the anti-1,4-elimination of the C-3 phosphate and the C-6 proR hydrogen from 5-enolpyruvylshikimate-3-phosphate (EPSP) to yield chorismate, which is the branch point compound that serves as the starting substrate for the three terminal pathways of aromatic amino acid biosynthesis. This reaction introduces a second double bond into the aromatic ring system. In Endomicrobium trichonymphae, this protein is Chorismate synthase.